The chain runs to 355 residues: Uroporphyrinogen decarboxylase (355 aa).

Substrate-binding positions include 27-31 (RQAGR), aspartate 78, tyrosine 155, serine 210, and histidine 328.

This sequence belongs to the uroporphyrinogen decarboxylase family. In terms of assembly, homodimer.

The protein localises to the cytoplasm. It carries out the reaction uroporphyrinogen III + 4 H(+) = coproporphyrinogen III + 4 CO2. Its pathway is porphyrin-containing compound metabolism; protoporphyrin-IX biosynthesis; coproporphyrinogen-III from 5-aminolevulinate: step 4/4. In terms of biological role, catalyzes the decarboxylation of four acetate groups of uroporphyrinogen-III to yield coproporphyrinogen-III. This is Uroporphyrinogen decarboxylase from Ectopseudomonas mendocina (strain ymp) (Pseudomonas mendocina).